The following is a 37-amino-acid chain: Large ribosomal subunit protein bL36 (37 aa).

It belongs to the bacterial ribosomal protein bL36 family.

The sequence is that of Large ribosomal subunit protein bL36 (rpmJ) from Mycoplasma sp.